The sequence spans 266 residues: MTLTEIIILAIIQGITEFLPISSSAHLILPSVLLGWENQGLAFDVAVHVGSLLAVMIYFRGDIGRMLVAWFGSGFSKNQTDDSRLAWWVIIATIPALIFGFAGKAFIEEYARSALVIACTTIGFGLLLWYADKKAALNKHIYDMTWKSALIVGMAQALALIPGTSRSGITMTAGLMLGLDRESAARFSFLLSIPVILGAGLLATLDLVSAPDAVDWNALIVGAVLSFVSAYACIYLFLAWISRIGMLPFVIYRMLLGVILLLFVFA.

Transmembrane regions (helical) follow at residues 1 to 21 (MTLTEIIILAIIQGITEFLPI), 39 to 59 (QGLAFDVAVHVGSLLAVMIYF), 87 to 107 (WWVIIATIPALIFGFAGKAFI), 111 to 131 (ARSALVIACTTIGFGLLLWYA), 150 to 172 (LIVGMAQALALIPGTSRSGITMT), 187 to 207 (FSFLLSIPVILGAGLLATLDL), 218 to 238 (ALIVGAVLSFVSAYACIYLFL), and 244 to 264 (IGMLPFVIYRMLLGVILLLFV).

This sequence belongs to the UppP family.

It localises to the cell inner membrane. The enzyme catalyses di-trans,octa-cis-undecaprenyl diphosphate + H2O = di-trans,octa-cis-undecaprenyl phosphate + phosphate + H(+). Functionally, catalyzes the dephosphorylation of undecaprenyl diphosphate (UPP). Confers resistance to bacitracin. This chain is Undecaprenyl-diphosphatase, found in Pseudoalteromonas atlantica (strain T6c / ATCC BAA-1087).